Reading from the N-terminus, the 461-residue chain is Trigger factor (461 aa).

Residues 166 to 245 enclose the PPIase FKBP-type domain; the sequence is GDFANIDLTA…VNSVKAEELP (80 aa).

The protein belongs to the FKBP-type PPIase family. Tig subfamily.

It localises to the cytoplasm. The catalysed reaction is [protein]-peptidylproline (omega=180) = [protein]-peptidylproline (omega=0). Involved in protein export. Acts as a chaperone by maintaining the newly synthesized protein in an open conformation. Functions as a peptidyl-prolyl cis-trans isomerase. The chain is Trigger factor from Bifidobacterium animalis subsp. lactis (strain AD011).